We begin with the raw amino-acid sequence, 537 residues long: MLRKWEARVKQIEERASHYERKPLSSVYRPRLAKPEEPSSIWKLFHRQNQAFNFVKSCKESVHVFALECKRGNGQRIYLVTSYAQLWFYYKTRKTLLHCYEVIPENAVCKLYFDLEFNKLANPGADGKMMVALLIQHVCKALEEFYNVQCSAEDVFNLDSSTEEKFSRHLIFQLHNVAFKDNRHAGNFVRKILQPALHLIAEDDEAKVPEAVGQDASGFSVTPLKQEISEAREKVGLPKQCDPDLSFLVVKNHMGEKCLFVDLGVYTKNRNFRLYQSSKIGKCVSLEVAEDNRFIPKQSKDISEENQYFLSSLVSNVRFSDTLRVLTCHPSQTKRKRAECFNSTGTSVESIEGFQGSPYPEVDQFVLSLVNKHDIKGGIRRWNYFFPEELLVYDICKYRWCENIGRAHKSNNIMILVDLKNEVWYQKCHDPVCKAQNFKSTCSPLPTEVSLLFLLKDEDFTSGETDDTSTSLTKDSQTPPSCNLSAGGLSAAAWDDEDDALFLEATEDAEFADAADKSLGSMDDIPDELIIEALQNS.

Positions 1-22 (MLRKWEARVKQIEERASHYERK) form a coiled coil. Substrate is bound by residues Arg76, 114 to 116 (DLE), 165 to 169 (KFSRH), 270 to 273 (RNFR), and Lys279. Positions 114 and 116 each coordinate Mn(2+). Zn(2+) is bound by residues Cys401, His408, Cys428, and Cys433. Positions 401–434 (CENIGRAHKSNNIMILVDLKNEVWYQKCHDPVCK) match the Zinc knuckle motif motif. Residues 462-481 (SGETDDTSTSLTKDSQTPPS) are disordered. An interaction with RPA1 region spans residues 462–536 (SGETDDTSTS…DELIIEALQN (75 aa)). Residues 468 to 478 (TSTSLTKDSQT) are compositionally biased toward low complexity. 2 short sequence motifs (RPA1-binding motif) span residues 494–507 (WDDEDDALFLEATE) and 524–532 (DIPDELIIE).

The protein belongs to the eukaryotic-type primase small subunit family. Interacts with RPA1; leading to recruitment to chromatin and stimulate DNA primase activity. Interacts with SSBP1. Interacts with POLDIP2; leading to enhance DNA polymerase activity. It depends on Mn(2+) as a cofactor.

It is found in the nucleus. Its subcellular location is the mitochondrion matrix. The protein resides in the chromosome. The enzyme catalyses ssDNA + n NTP = ssDNA/pppN(pN)n-1 hybrid + (n-1) diphosphate.. The catalysed reaction is DNA(n) + a 2'-deoxyribonucleoside 5'-triphosphate = DNA(n+1) + diphosphate. In terms of biological role, DNA primase and DNA polymerase required to tolerate replication-stalling lesions by bypassing them. Required to facilitate mitochondrial and nuclear replication fork progression by initiating de novo DNA synthesis using dNTPs and acting as an error-prone DNA polymerase able to bypass certain DNA lesions. Shows a high capacity to tolerate DNA damage lesions such as 8oxoG and abasic sites in DNA. Provides different translesion synthesis alternatives when DNA replication is stalled: able to synthesize DNA primers downstream of lesions, such as ultraviolet (UV) lesions, R-loops and G-quadruplexes, to allow DNA replication to continue. Can also realign primers ahead of 'unreadable lesions' such as abasic sites and 6-4 photoproduct (6-4 pyrimidine-pyrimidinone), thereby skipping the lesion. Repriming avoids fork degradation while leading to accumulation of internal ssDNA gaps behind the forks. Also able to incorporate nucleotides opposite DNA lesions such as 8oxoG, like a regular translesion synthesis DNA polymerase. Also required for reinitiating stalled forks after UV damage during nuclear DNA replication. Required for mitochondrial DNA (mtDNA) synthesis and replication, by reinitiating synthesis after UV damage or in the presence of chain-terminating nucleotides. Prevents APOBEC family-mediated DNA mutagenesis by repriming downstream of abasic site to prohibit error-prone translesion synthesis. Has non-overlapping function with POLH. In addition to its role in DNA damage response, also required to maintain efficient nuclear and mitochondrial DNA replication in unperturbed cells. The polypeptide is DNA-directed primase/polymerase protein (Mus musculus (Mouse)).